A 282-amino-acid chain; its full sequence is MAAVVGVSLKRGFSATALGRVGLQFQACREAQTAAAAAPRIKTFAIYRWDPDKAGDKPRMQTYKVDLNKCGPMVLDALIKIKNEIDSTLTFRRSCREGICGSCAMNINGGNTLACTRRIDTDLGKVSKIYPLPHMYVIKDLVPDLSNFYAQYKSIEPYLKKKDESQEGKQQYLQSIEDREKLDGLYECILCACCSTSCPSYWWNGDKYLGPAVLMQAYRWMIDSRDEFTEERLAKLQDPFSLYRCHTIMNCTQTCPKGLNPGKAIAEIKKMMATYKEKRALA.

The N-terminal 30 residues, 1–30 (MAAVVGVSLKRGFSATALGRVGLQFQACRE), are a transit peptide targeting the mitochondrion. N6-acetyllysine is present on residues Lys-53 and Lys-57. The 80-residue stretch at 56–135 (DKPRMQTYKV…VSKIYPLPHM (80 aa)) folds into the 2Fe-2S ferredoxin-type domain. [2Fe-2S] cluster is bound by residues Cys-95, Cys-100, Cys-103, and Cys-115. An interaction with SDHAF1 region spans residues 148–220 (FYAQYKSIEP…PAVLMQAYRW (73 aa)). The 31-residue stretch at 178–208 (DREKLDGLYECILCACCSTSCPSYWWNGDKY) folds into the 4Fe-4S ferredoxin-type domain. Positions 188, 191, and 194 each coordinate [4Fe-4S] cluster. Cys-198 contacts [3Fe-4S] cluster. Trp-203 contacts a ubiquinone. [3Fe-4S] cluster contacts are provided by Cys-245 and Cys-251. Cys-255 lines the [4Fe-4S] cluster pocket.

The protein belongs to the succinate dehydrogenase/fumarate reductase iron-sulfur protein family. As to quaternary structure, component of complex II composed of four subunits: the flavoprotein (FP) SDHA, iron-sulfur protein (IP) SDHB, and a cytochrome b560 composed of SDHC and SDHD. Interacts with SDHAF1; the interaction is required for iron-sulfur cluster incorporation into SDHB. [2Fe-2S] cluster is required as a cofactor. Requires [3Fe-4S] cluster as cofactor. It depends on [4Fe-4S] cluster as a cofactor.

The protein resides in the mitochondrion inner membrane. The enzyme catalyses a quinone + succinate = fumarate + a quinol. It catalyses the reaction (R)-malate + a quinone = enol-oxaloacetate + a quinol. It carries out the reaction (S)-malate + a quinone = enol-oxaloacetate + a quinol. The protein operates within carbohydrate metabolism; tricarboxylic acid cycle; fumarate from succinate (eukaryal route): step 1/1. Its activity is regulated as follows. Enol-oxaloacetate inhibits the succinate dehydrogenase activity. Iron-sulfur protein (IP) subunit of the succinate dehydrogenase complex (mitochondrial respiratory chain complex II), responsible for transferring electrons from succinate to ubiquinone (coenzyme Q). SDH also oxidizes malate to the non-canonical enol form of oxaloacetate, enol-oxaloacetate. Enol-oxaloacetate, which is a potent inhibitor of the succinate dehydrogenase activity, is further isomerized into keto-oxaloacetate. The protein is Succinate dehydrogenase [ubiquinone] iron-sulfur subunit, mitochondrial (Sdhb) of Rattus norvegicus (Rat).